The primary structure comprises 366 residues: Mitogen-activated protein kinase sakA (366 aa).

The region spanning 20-299 is the Protein kinase domain; that stretch reads YTDLQPVGMG…AGEALAHEYL (280 aa). Residues 26–34 and lysine 49 contribute to the ATP site; that span reads VGMGAFGLV. The Proton acceptor role is filled by aspartate 141. Threonine 171 bears the Phosphothreonine mark. Residues 171-173 carry the TXY motif; that stretch reads TGY. Position 173 is a phosphotyrosine (tyrosine 173).

Belongs to the protein kinase superfamily. Ser/Thr protein kinase family. MAP kinase subfamily. HOG1 sub-subfamily. As to quaternary structure, interacts with the AGC kinase ypkA. Interacts with sakA upon osmotic and cell wall stresses. The cofactor is Mg(2+). Dually phosphorylated on Thr-171 and Tyr-173, which activates the enzyme. Environmental stresses such as high temperature, osmotic stress, cold stress or ethanol stress modulate the activation of sakA via phosphorylation.

Its subcellular location is the cytoplasm. It is found in the nucleus. The enzyme catalyses L-seryl-[protein] + ATP = O-phospho-L-seryl-[protein] + ADP + H(+). It catalyses the reaction L-threonyl-[protein] + ATP = O-phospho-L-threonyl-[protein] + ADP + H(+). Its activity is regulated as follows. Activated by tyrosine and threonine phosphorylation. Deactivated by protein phosphatase 2C homolog 2 ptcB. Proline-directed serine/threonine-protein kinase involved in a signal transduction pathway that is activated by changes in the osmolarity of the extracellular environment. Controls osmotic regulation of transcription of target genes. Involved in environmental stress response. With mpkC, plays a redundant or cooperative role in the conidial stress resistance. Also plays a supportive role in osmotic stress adaptation when sakA is deficient. Involved in paradoxical growth, the cell wall integrity (CWI) pathway and biofilm formation. Also collaborates with mpkC to allow ful virulence in a neutropenic murine model ofinvasive pulmonary aspergillosis. MpkC and sakA have both independent and collaborative functions during the transcriptional response to transient osmotic stress and sakA not only seems to modulate pathways involved in nucleotide, fatty acid, nitrogen and organic acid biosynthesis but is also important for the activation of genes involved in mitochondrial and endoplasmic reticulum functions. In Aspergillus fumigatus (strain ATCC MYA-4609 / CBS 101355 / FGSC A1100 / Af293) (Neosartorya fumigata), this protein is Mitogen-activated protein kinase sakA.